The primary structure comprises 209 residues: MAQQDVKPTRSELINLKKKIKLSESGHKLLKMKRDGLILEFFKILNEARNVRTELDAAFAKSTEKINLASAVNGMVAVRSTAFTAKESPEIQLSGHNIMGVVVPKISSTGVRKSLYERGYGIIGTNSYIDETADAYEDLVEKIITAAELETTMKRLLDEIEKTKRRVNALEFKVIPELIDTMKYIRFMLEEMERENTFRLKRVKARMRD.

The protein belongs to the V-ATPase D subunit family. Has multiple subunits, A(3), B(3), C, D, E, F, G, I and K(x); there may be a few other subunits as well.

The protein resides in the cell membrane. Functionally, component of the A-type ATP synthase that produces ATP from ADP in the presence of a proton gradient across the membrane. This is A-type ATP synthase subunit D from Methanosarcina mazei (strain ATCC BAA-159 / DSM 3647 / Goe1 / Go1 / JCM 11833 / OCM 88) (Methanosarcina frisia).